The following is a 1083-amino-acid chain: Regulator of the glycerol channel 1 (1083 aa).

2 disordered regions span residues 1-46 and 69-89; these read MSDY…GSSD and LKNEPASGNTQMNGPDGKENK. Residues 13 to 31 show a composition bias toward polar residues; sequence GGISKQPATPGSTRSSSRN. A phosphoserine mark is found at Ser-136, Ser-249, Ser-252, Ser-481, and Ser-537. One can recognise a PH domain in the interval 495 to 606; sequence CIRVGYLLKK…DCSLKDSTDS (112 aa). Residues 534-582 form a disordered region; that stretch reads DSKSPRSKNKPVVEQSDISRVNKDGTNAGSHPSSKGTQDPKLTKRRKGL. Residues 549-570 are compositionally biased toward polar residues; that stretch reads SDISRVNKDGTNAGSHPSSKGT. A phosphoserine mark is found at Ser-652, Ser-765, and Ser-813. Phosphothreonine occurs at positions 817 and 857. Residues Ser-866, Ser-879, Ser-918, Ser-966, Ser-969, and Ser-975 each carry the phosphoserine modification. The disordered stretch occupies residues 979 to 1083; the sequence is EENRTQNCSG…TVPATSASSK (105 aa). 3 stretches are compositionally biased toward polar residues: residues 983 to 992, 1043 to 1061, and 1071 to 1083; these read TQNCSGSRKS, LKKTYSAENVPLTSTVSND, and STNTVPATSASSK. Phosphoserine is present on residues Ser-1059, Ser-1081, and Ser-1082.

Belongs to the RGC1 family.

The protein resides in the cytoplasm. Its function is as follows. Positive regulator of FPS1 glycerol channel required for the glycerol efflux. This Saccharomyces cerevisiae (strain ATCC 204508 / S288c) (Baker's yeast) protein is Regulator of the glycerol channel 1 (RGC1).